The sequence spans 168 residues: 3-isopropylmalate dehydratase small subunit (168 aa).

Belongs to the LeuD family. LeuD type 2 subfamily. In terms of assembly, heterodimer of LeuC and LeuD.

The enzyme catalyses (2R,3S)-3-isopropylmalate = (2S)-2-isopropylmalate. Its pathway is amino-acid biosynthesis; L-leucine biosynthesis; L-leucine from 3-methyl-2-oxobutanoate: step 2/4. Catalyzes the isomerization between 2-isopropylmalate and 3-isopropylmalate, via the formation of 2-isopropylmaleate. This is 3-isopropylmalate dehydratase small subunit from Thermodesulfovibrio yellowstonii (strain ATCC 51303 / DSM 11347 / YP87).